Consider the following 451-residue polypeptide: Methylenetetrahydrofolate--tRNA-(uracil-5-)-methyltransferase TrmFO (451 aa).

Residue Gly-9 to Gly-14 coordinates FAD.

It belongs to the MnmG family. TrmFO subfamily. The cofactor is FAD.

The protein localises to the cytoplasm. The enzyme catalyses uridine(54) in tRNA + (6R)-5,10-methylene-5,6,7,8-tetrahydrofolate + NADH + H(+) = 5-methyluridine(54) in tRNA + (6S)-5,6,7,8-tetrahydrofolate + NAD(+). It carries out the reaction uridine(54) in tRNA + (6R)-5,10-methylene-5,6,7,8-tetrahydrofolate + NADPH + H(+) = 5-methyluridine(54) in tRNA + (6S)-5,6,7,8-tetrahydrofolate + NADP(+). Functionally, catalyzes the folate-dependent formation of 5-methyl-uridine at position 54 (M-5-U54) in all tRNAs. The polypeptide is Methylenetetrahydrofolate--tRNA-(uracil-5-)-methyltransferase TrmFO (Dinoroseobacter shibae (strain DSM 16493 / NCIMB 14021 / DFL 12)).